Reading from the N-terminus, the 398-residue chain is Succinate--CoA ligase [ADP-forming] subunit beta (398 aa).

The ATP-grasp domain maps to 9–254 (KAVLREFGVP…ESEEDAKEIE (246 aa)). ATP-binding positions include K46, 53–55 (GRG), E109, S112, and E117. The Mg(2+) site is built by N209 and D223. Substrate-binding positions include N274 and 331 to 333 (GIM).

Belongs to the succinate/malate CoA ligase beta subunit family. As to quaternary structure, heterotetramer of two alpha and two beta subunits. Mg(2+) serves as cofactor.

It carries out the reaction succinate + ATP + CoA = succinyl-CoA + ADP + phosphate. It catalyses the reaction GTP + succinate + CoA = succinyl-CoA + GDP + phosphate. It functions in the pathway carbohydrate metabolism; tricarboxylic acid cycle; succinate from succinyl-CoA (ligase route): step 1/1. Succinyl-CoA synthetase functions in the citric acid cycle (TCA), coupling the hydrolysis of succinyl-CoA to the synthesis of either ATP or GTP and thus represents the only step of substrate-level phosphorylation in the TCA. The beta subunit provides nucleotide specificity of the enzyme and binds the substrate succinate, while the binding sites for coenzyme A and phosphate are found in the alpha subunit. The polypeptide is Succinate--CoA ligase [ADP-forming] subunit beta (Rhodopseudomonas palustris (strain HaA2)).